Reading from the N-terminus, the 344-residue chain is S-adenosylmethionine:tRNA ribosyltransferase-isomerase (344 aa).

Belongs to the QueA family. Monomer.

Its subcellular location is the cytoplasm. It carries out the reaction 7-aminomethyl-7-carbaguanosine(34) in tRNA + S-adenosyl-L-methionine = epoxyqueuosine(34) in tRNA + adenine + L-methionine + 2 H(+). The protein operates within tRNA modification; tRNA-queuosine biosynthesis. Its function is as follows. Transfers and isomerizes the ribose moiety from AdoMet to the 7-aminomethyl group of 7-deazaguanine (preQ1-tRNA) to give epoxyqueuosine (oQ-tRNA). This chain is S-adenosylmethionine:tRNA ribosyltransferase-isomerase, found in Thiobacillus denitrificans (strain ATCC 25259 / T1).